Here is a 67-residue protein sequence, read N- to C-terminus: DNA-directed RNA polymerase subunit omega (67 aa).

The protein belongs to the RNA polymerase subunit omega family. As to quaternary structure, the RNAP catalytic core consists of 2 alpha, 1 beta, 1 beta' and 1 omega subunit. When a sigma factor is associated with the core the holoenzyme is formed, which can initiate transcription.

It carries out the reaction RNA(n) + a ribonucleoside 5'-triphosphate = RNA(n+1) + diphosphate. In terms of biological role, promotes RNA polymerase assembly. Latches the N- and C-terminal regions of the beta' subunit thereby facilitating its interaction with the beta and alpha subunits. This is DNA-directed RNA polymerase subunit omega from Exiguobacterium sibiricum (strain DSM 17290 / CCUG 55495 / CIP 109462 / JCM 13490 / 255-15).